Here is a 131-residue protein sequence, read N- to C-terminus: Large ribosomal subunit protein bL17 (131 aa).

It belongs to the bacterial ribosomal protein bL17 family. As to quaternary structure, part of the 50S ribosomal subunit. Contacts protein L32.

The protein is Large ribosomal subunit protein bL17 of Thermotoga neapolitana (strain ATCC 49049 / DSM 4359 / NBRC 107923 / NS-E).